Here is a 276-residue protein sequence, read N- to C-terminus: Large ribosomal subunit protein uL2 (276 aa).

Disordered stretches follow at residues 1-50 (MPIK…GRVT) and 206-276 (GKAG…SKKR). A compositionally biased stretch (polar residues) spans 7–19 (RPTTPTRRFQTVV). A compositionally biased stretch (basic and acidic residues) spans 20 to 38 (SREDITKQTPEKSLVESKK).

This sequence belongs to the universal ribosomal protein uL2 family. In terms of assembly, part of the 50S ribosomal subunit. Forms a bridge to the 30S subunit in the 70S ribosome.

In terms of biological role, one of the primary rRNA binding proteins. Required for association of the 30S and 50S subunits to form the 70S ribosome, for tRNA binding and peptide bond formation. It has been suggested to have peptidyltransferase activity; this is somewhat controversial. Makes several contacts with the 16S rRNA in the 70S ribosome. The chain is Large ribosomal subunit protein uL2 from Solibacter usitatus (strain Ellin6076).